The following is an 848-amino-acid chain: DNA mismatch repair protein MutS (848 aa).

605–612 is an ATP binding site; sequence GPNMAGKS.

This sequence belongs to the DNA mismatch repair MutS family.

Its function is as follows. This protein is involved in the repair of mismatches in DNA. It is possible that it carries out the mismatch recognition step. This protein has a weak ATPase activity. The sequence is that of DNA mismatch repair protein MutS from Leptospira interrogans serogroup Icterohaemorrhagiae serovar copenhageni (strain Fiocruz L1-130).